The primary structure comprises 386 residues: Palmitoyltransferase ZDHHC9 (386 aa).

The Cytoplasmic portion of the chain corresponds to methionine 1–lysine 35. A helical transmembrane segment spans residues glycine 36 to glutamate 56. At cysteine 57 to histidine 63 the chain is on the lumenal side. A helical membrane pass occupies residues leucine 64–leucine 84. Residues arginine 85 to tyrosine 183 lie on the Cytoplasmic side of the membrane. Residues lysine 139–leucine 189 enclose the DHHC domain. The active-site S-palmitoyl cysteine intermediate is the cysteine 169. Residues phenylalanine 184–valine 204 form a helical membrane-spanning segment. Residues histidine 205–glycine 224 are Lumenal-facing. A helical membrane pass occupies residues threonine 225–phenylalanine 245. Residues histidine 246–histidine 386 are Cytoplasmic-facing. Residues serine 306–serine 334 are compositionally biased toward polar residues. Residues serine 306–histidine 386 form a disordered region.

Belongs to the DHHC palmitoyltransferase family. ERF2/ZDHHC9 subfamily.

It localises to the endoplasmic reticulum membrane. It is found in the golgi apparatus membrane. The enzyme catalyses L-cysteinyl-[protein] + hexadecanoyl-CoA = S-hexadecanoyl-L-cysteinyl-[protein] + CoA. Palmitoyltransferase that catalyzes the addition of palmitate onto various protein substrates, such as ADRB2, GSDMD, HRAS, NRAS and CGAS. The polypeptide is Palmitoyltransferase ZDHHC9 (Danio rerio (Zebrafish)).